The following is a 150-amino-acid chain: D-aminoacyl-tRNA deacylase (150 aa).

Positions 136-137 (GP) match the Gly-cisPro motif, important for rejection of L-amino acids motif.

The protein belongs to the DTD family. As to quaternary structure, homodimer.

It is found in the cytoplasm. It carries out the reaction glycyl-tRNA(Ala) + H2O = tRNA(Ala) + glycine + H(+). The enzyme catalyses a D-aminoacyl-tRNA + H2O = a tRNA + a D-alpha-amino acid + H(+). An aminoacyl-tRNA editing enzyme that deacylates mischarged D-aminoacyl-tRNAs. Also deacylates mischarged glycyl-tRNA(Ala), protecting cells against glycine mischarging by AlaRS. Acts via tRNA-based rather than protein-based catalysis; rejects L-amino acids rather than detecting D-amino acids in the active site. By recycling D-aminoacyl-tRNA to D-amino acids and free tRNA molecules, this enzyme counteracts the toxicity associated with the formation of D-aminoacyl-tRNA entities in vivo and helps enforce protein L-homochirality. The sequence is that of D-aminoacyl-tRNA deacylase from Macrococcus caseolyticus (strain JCSC5402) (Macrococcoides caseolyticum).